The following is a 577-amino-acid chain: NKAP family protein UM04995 (577 aa).

The interval 1 to 479 is disordered; the sequence is MPTLAERLGS…YGGALLPGEG (479 aa). Over residues 20 to 31 the composition is skewed to basic and acidic residues; that stretch reads KSSHDREQELRS. Positions 36–49 are enriched in polar residues; it reads SKQTSRNTAHQDLA. Basic and acidic residues predominate over residues 50–60; that stretch reads SSERRSIDREL. Residues 70–89 show a composition bias toward low complexity; it reads SPLSSPQNGSSPRRQRGSPS. Basic and acidic residues-rich tracts occupy residues 127 to 163, 170 to 193, and 265 to 297; these read PRED…DSRR, SGDR…REAP, and DSSS…DKHH. Composition is skewed to basic residues over residues 298–316 and 325–336; these read SSSR…RRSS and SRHRHTRSSRSH. Over residues 340-350 the composition is skewed to acidic residues; sequence DDDDDDDEDVD. A compositionally biased stretch (basic and acidic residues) spans 363-385; sequence KVSDGSDSGRSESETDSDSDARS. Basic residues predominate over residues 386 to 395; that stretch reads SRHRRRHHKS. Basic and acidic residues-rich tracts occupy residues 396–408 and 417–439; these read DRSS…ESEK and SESE…RRDS. Residues 529–570 are a coiled coil; it reads RKENQVISAEEKRTMLRLQAEEKAKKEREIVSQFKELVDTLQ.

It belongs to the NKAP family.

The protein is NKAP family protein UM04995 of Mycosarcoma maydis (Corn smut fungus).